The primary structure comprises 464 residues: Dihydrolipoyllysine-residue succinyltransferase component of 2-oxoglutarate dehydrogenase complex 1, mitochondrial (464 aa).

The N-terminal 86 residues, 1 to 86, are a transit peptide targeting the mitochondrion; sequence MMLRAVFRRA…TALQRWVRPF (86 aa). A Lipoyl-binding domain is found at 93-168; it reads VVEAVVPHMG…EPGNKVARIS (76 aa). The residue at position 134 (Lys134) is an N6-lipoyllysine. Positions 168–242 are disordered; the sequence is STSADAVSHV…DRERRVPMTR (75 aa). Positions 196-210 are enriched in basic and acidic residues; the sequence is EKPKVESTKVAEKPK. Residues 211–220 are compositionally biased toward pro residues; that stretch reads APSPPPPPPS. Residues His435 and Asp439 contribute to the active site.

Belongs to the 2-oxoacid dehydrogenase family. Forms a 24-polypeptide structural core with octahedral symmetry. (R)-lipoate is required as a cofactor.

The protein resides in the mitochondrion. It carries out the reaction N(6)-[(R)-dihydrolipoyl]-L-lysyl-[protein] + succinyl-CoA = N(6)-[(R)-S(8)-succinyldihydrolipoyl]-L-lysyl-[protein] + CoA. The protein operates within amino-acid degradation; L-lysine degradation via saccharopine pathway; glutaryl-CoA from L-lysine: step 6/6. Functionally, the 2-oxoglutarate dehydrogenase complex catalyzes the overall conversion of 2-oxoglutarate to succinyl-CoA and CO(2). It contains multiple copies of three enzymatic components: 2-oxoglutarate dehydrogenase (E1), dihydrolipoamide succinyltransferase (E2) and lipoamide dehydrogenase (E3). In Arabidopsis thaliana (Mouse-ear cress), this protein is Dihydrolipoyllysine-residue succinyltransferase component of 2-oxoglutarate dehydrogenase complex 1, mitochondrial.